A 98-amino-acid polypeptide reads, in one-letter code: NADH-ubiquinone oxidoreductase chain 4L (98 aa).

3 helical membrane passes run 2 to 22, 26 to 46, and 59 to 79; these read QMTM…LLMF, FMSS…LMSI, and FPLV…SLLV.

The protein belongs to the complex I subunit 4L family. In terms of assembly, core subunit of respiratory chain NADH dehydrogenase (Complex I) which is composed of 45 different subunits.

Its subcellular location is the mitochondrion inner membrane. The catalysed reaction is a ubiquinone + NADH + 5 H(+)(in) = a ubiquinol + NAD(+) + 4 H(+)(out). Functionally, core subunit of the mitochondrial membrane respiratory chain NADH dehydrogenase (Complex I) which catalyzes electron transfer from NADH through the respiratory chain, using ubiquinone as an electron acceptor. Part of the enzyme membrane arm which is embedded in the lipid bilayer and involved in proton translocation. The protein is NADH-ubiquinone oxidoreductase chain 4L (MT-ND4L) of Echinosorex gymnura (Moon rat).